A 354-amino-acid polypeptide reads, in one-letter code: Histidinol-phosphate aminotransferase (354 aa).

Positions 1 to 11 (MKSFLSDKAKS) are enriched in basic and acidic residues. A disordered region spans residues 1 to 33 (MKSFLSDKAKSIEPYTPGEQPKDKNYIKLNTNE). At Lys211 the chain carries N6-(pyridoxal phosphate)lysine.

Belongs to the class-II pyridoxal-phosphate-dependent aminotransferase family. Histidinol-phosphate aminotransferase subfamily. As to quaternary structure, homodimer. The cofactor is pyridoxal 5'-phosphate.

The enzyme catalyses L-histidinol phosphate + 2-oxoglutarate = 3-(imidazol-4-yl)-2-oxopropyl phosphate + L-glutamate. The protein operates within amino-acid biosynthesis; L-histidine biosynthesis; L-histidine from 5-phospho-alpha-D-ribose 1-diphosphate: step 7/9. The sequence is that of Histidinol-phosphate aminotransferase from Brachyspira hyodysenteriae (strain ATCC 49526 / WA1).